Consider the following 673-residue polypeptide: ATP-binding cassette sub-family G member 8 (673 aa).

Positions 1-11 (MAGKAAEERGL) are enriched in basic and acidic residues. A disordered region spans residues 1 to 25 (MAGKAAEERGLPKGATPQDTSGLQD). Over 1–416 (MAGKAAEERG…ISNDFRDLPT (416 aa)) the chain is Cytoplasmic. Residues 47-313 (LEVRDLNYQV…FTAIGYPCPR (267 aa)) enclose the ABC transporter domain. The ABC transmembrane type-2 domain occupies 411–665 (FRDLPTLLIH…VLYYVSLRFI (255 aa)). Residues 417–437 (LLIHGAEACLMSMTIGFLYFG) form a helical membrane-spanning segment. Residues 438–447 (HGSIQLSFMD) are Extracellular-facing. The helical transmembrane segment at 448-468 (TAALLFMIGALIPFNVILDVI) threads the bilayer. At 469 to 497 (SKCYSERAMLYYELEDGLYTTGPYFFAKI) the chain is on the cytoplasmic side. Residues 498 to 518 (LGELPEHCAYIIIYGMPTYWL) form a helical membrane-spanning segment. At 519-527 (ANLRPGLQP) the chain is on the extracellular side. The chain crosses the membrane as a helical span at residues 528-548 (FLLHFLLVWLVVFCCRIMALA). At 549 to 555 (AAALLPT) the chain is on the cytoplasmic side. Residues 556-576 (FHMASFFSNALYNSFYLAGGF) form a helical membrane-spanning segment. Over 577–639 (MINLSSLWTV…LSVMELDSYP (63 aa)) the chain is Extracellular. N619 carries an N-linked (GlcNAc...) asparagine glycan. The chain crosses the membrane as a helical span at residues 640–660 (LYAIYLIVIGLSGGFMVLYYV). The Cytoplasmic portion of the chain corresponds to 661–673 (SLRFIKQKPSQDW).

This sequence belongs to the ABC transporter superfamily. ABCG family. Eye pigment precursor importer (TC 3.A.1.204) subfamily. In terms of assembly, heterodimer with ABCG8. Mg(2+) serves as cofactor. Post-translationally, N-glycosylated. In terms of tissue distribution, predominantly expressed in the liver. Low expression levels in the small intestine and colon. Very low levels in other tissues, including brain, heart and spleen.

Its subcellular location is the cell membrane. The protein localises to the apical cell membrane. The enzyme catalyses cholesterol(in) + ATP + H2O = cholesterol(out) + ADP + phosphate + H(+). It catalyses the reaction sitosterol(in) + ATP + H2O = sitosterol(out) + ADP + phosphate + H(+). Its activity is regulated as follows. The ATPase activity of the heterodimer is stimulated by cholate. Taurocholate, glycocholate, taurochenodeoxycholate, glycochenodeoxycholate and taurodeoxycholate also stimulate ATPase activity, but to a lower degree. Glycodeoxycholate has no significant effect on ATPase activity. ATPase activity is inhibited by vanadate and by berillium fluoride. In terms of biological role, ABCG5 and ABCG8 form an obligate heterodimer that mediates Mg(2+)- and ATP-dependent sterol transport across the cell membrane. Plays an essential role in the selective transport of the dietary cholesterol in and out of the enterocytes and in the selective sterol excretion by the liver into bile. Required for normal sterol homeostasis. The heterodimer with ABCG5 has ATPase activity. The polypeptide is ATP-binding cassette sub-family G member 8 (Homo sapiens (Human)).